The chain runs to 352 residues: Uroporphyrinogen decarboxylase (352 aa).

Residues 27-31 (RQAGR), Asp77, Tyr154, Thr209, and His325 each bind substrate.

Belongs to the uroporphyrinogen decarboxylase family. Homodimer.

Its subcellular location is the cytoplasm. It catalyses the reaction uroporphyrinogen III + 4 H(+) = coproporphyrinogen III + 4 CO2. It participates in porphyrin-containing compound metabolism; protoporphyrin-IX biosynthesis; coproporphyrinogen-III from 5-aminolevulinate: step 4/4. Catalyzes the decarboxylation of four acetate groups of uroporphyrinogen-III to yield coproporphyrinogen-III. The sequence is that of Uroporphyrinogen decarboxylase from Legionella pneumophila subsp. pneumophila (strain Philadelphia 1 / ATCC 33152 / DSM 7513).